Here is a 647-residue protein sequence, read N- to C-terminus: Versicolorin B synthase (647 aa).

Residues 1–26 (MALSTILTAAAMPVAGLFAFAQQSSA) form the signal peptide. Residues 85-86 (TA) and 106-107 (EA) contribute to the FAD site. A glycan (N-linked (GlcNAc...) asparagine) is linked at Asn-117. 172-175 (GAML) contributes to the FAD binding site. N-linked (GlcNAc...) asparagine glycans are attached at residues Asn-222 and Asn-509. FAD is bound by residues Ala-617 and 628-629 (PM).

The protein belongs to the GMC oxidoreductase family. As to quaternary structure, homodimer. Requires FAD as cofactor.

It is found in the cytoplasm. The protein resides in the cytosol. The catalysed reaction is (2S-3S)-versiconal hemiacetal = versicolorin B + H2O. It carries out the reaction (S)-5'-oxoaverantin + H(+) = (1'S,5'S)-averufin + H2O. It functions in the pathway mycotoxin biosynthesis. Its function is as follows. Versicolorin B synthase; part of the fragmented gene cluster that mediates the biosynthesis of dothistromin (DOTH), a polyketide toxin very similar in structure to the aflatoxin precursor, versicolorin B. The first step of the pathway is the conversion of acetate to norsolorinic acid (NOR) and requires the fatty acid synthase subunits hexA and hexB, as well as the polyketide synthase pksA. PksA combines a hexanoyl starter unit and 7 malonyl-CoA extender units to synthesize the precursor NOR. The hexanoyl starter unit is provided to the acyl-carrier protein (ACP) domain by the fungal fatty acid synthase hexA/hexB. The second step is the conversion of NOR to averantin (AVN) and requires the norsolorinic acid ketoreductase nor1, which catalyzes the dehydration of norsolorinic acid to form (1'S)-averantin. The cytochrome P450 monooxygenase avnA then catalyzes the hydroxylation of AVN to 5'hydroxyaverantin (HAVN). The next step is performed by adhA that transforms HAVN to averufin (AVF). Averufin might then be converted to hydroxyversicolorone by cypX and avfA. Hydroxyversicolorone is further converted versiconal hemiacetal acetate (VHA) by moxY. VHA is then the substrate for the versiconal hemiacetal acetate esterase est1 to yield versiconal (VAL). Versicolorin B synthase vbsA then converts VAL to versicolorin B (VERB) by closing the bisfuran ring. Then, the activity of the versicolorin B desaturase verB leads to versicolorin A (VERA). DotB, a predicted chloroperoxidase, may perform epoxidation of the A-ring of VERA. Alternatively, a cytochrome P450, such as cypX or avnA could catalyze this step. It is also possible that another, uncharacterized, cytochrome P450 enzyme is responsible for this step. Opening of the epoxide could potentially be achieved by the epoxide hydrolase epoA. However, epoA seems not to be required for DOTH biosynthesis, but other epoxide hydrolases may have the ability to complement this hydrolysis. Alternatively, opening of the epoxide ring could be achieved non-enzymatically. The next step is the deoxygenation of ring A to yield the 5,8-dihydroxyanthraquinone which is most likely catalyzed by the NADPH dehydrogenase encoded by ver1. The last stages of DOTH biosynthesis are proposed to involve hydroxylation of the bisfuran. OrdB and norB might have oxidative roles here. An alternative possibility is that cytochrome P450 monoogenases such as avnA and cypX might perform these steps in addition to previously proposed steps. This is Versicolorin B synthase from Dothistroma septosporum (Red band needle blight fungus).